A 308-amino-acid polypeptide reads, in one-letter code: D-alanine--D-alanine ligase B (308 aa).

The region spanning 102 to 302 (KKVAAAAGVV…FAELLSWMVE (201 aa)) is the ATP-grasp domain. Position 128–183 (128–183 (PMKPPYVVKPVREGSSFGVVIVKEDQPHPPQVIGSADWKYGDEVMVEGYIAGRELT)) interacts with ATP. Asp252, Glu269, and Asn271 together coordinate Mg(2+).

It belongs to the D-alanine--D-alanine ligase family. Mg(2+) is required as a cofactor. The cofactor is Mn(2+).

It localises to the cytoplasm. The catalysed reaction is 2 D-alanine + ATP = D-alanyl-D-alanine + ADP + phosphate + H(+). The protein operates within cell wall biogenesis; peptidoglycan biosynthesis. Cell wall formation. The sequence is that of D-alanine--D-alanine ligase B from Brucella suis biovar 1 (strain 1330).